A 489-amino-acid chain; its full sequence is Hyaluronoglucuronidase (489 aa).

The active-site Proton donor is Glu-176. Catalysis depends on Glu-290, which acts as the Nucleophile.

It belongs to the glycosyl hydrolase 79 family.

The enzyme catalyses Random hydrolysis of (1-&gt;3)-linkages between beta-D-glucuronate and N-acetyl-D-glucosamine residues in hyaluronate.. With respect to regulation, hyaluronidase activity is inhibited by Mn(2+), Cu(2+) and Fe(3+). Its function is as follows. Hyaluronidase that mediates hydrolysis of (1-&gt;3)-linkages between beta-D-glucuronate and N-acetyl-D-glucosamine residues in hyaluronate. Very specific to hyaluronate: not able to hydrolyze chitin, heparin or chondroitin sulfate. The protein is Hyaluronoglucuronidase of Hirudo nipponia (Korean blood-sucking leech).